The chain runs to 356 residues: Arginine kinase Scy s 2 (356 aa).

The 83-residue stretch at 9 to 91 (KLEEGFKKLE…FDPIIEDYHK (83 aa)) folds into the Phosphagen kinase N-terminal domain. Position 64 to 68 (64 to 68 (GVGVY)) interacts with L-arginine. The 238-residue stretch at 119 to 356 (FVISTRVRCG…LELIKMEKEM (238 aa)) folds into the Phosphagen kinase C-terminal domain. ATP-binding positions include 122 to 126 (STRVR) and His-185. L-arginine is bound at residue Glu-225. Residue Arg-229 participates in ATP binding. Cys-271 provides a ligand contact to L-arginine. ATP is bound by residues 280–284 (RASVH) and 309–314 (RGTRGE). Glu-314 is a binding site for L-arginine.

The protein belongs to the ATP:guanido phosphotransferase family. In terms of tissue distribution, muscle (at protein level).

It catalyses the reaction L-arginine + ATP = N(omega)-phospho-L-arginine + ADP + H(+). Catalyzes the reversible transfer of high energy ATP gamma-phosphate group to L-arginine. In Scylla serrata (Mud crab), this protein is Arginine kinase Scy s 2.